Reading from the N-terminus, the 83-residue chain is UPF0298 protein SERP0712 (83 aa).

It belongs to the UPF0298 family.

Its subcellular location is the cytoplasm. This is UPF0298 protein SERP0712 from Staphylococcus epidermidis (strain ATCC 35984 / DSM 28319 / BCRC 17069 / CCUG 31568 / BM 3577 / RP62A).